Here is a 272-residue protein sequence, read N- to C-terminus: Formamidopyrimidine-DNA glycosylase (272 aa).

Proline 2 functions as the Schiff-base intermediate with DNA in the catalytic mechanism. Glutamate 3 serves as the catalytic Proton donor. Lysine 58 serves as the catalytic Proton donor; for beta-elimination activity. Residues histidine 94, arginine 112, and arginine 153 each contribute to the DNA site. An FPG-type zinc finger spans residues 238–272; that stretch reads FVYDRAGEPCRVCGAPIRQIVQGQRSTYFCPNCQR. Arginine 262 (proton donor; for delta-elimination activity) is an active-site residue.

This sequence belongs to the FPG family. Monomer. Requires Zn(2+) as cofactor.

It catalyses the reaction Hydrolysis of DNA containing ring-opened 7-methylguanine residues, releasing 2,6-diamino-4-hydroxy-5-(N-methyl)formamidopyrimidine.. It carries out the reaction 2'-deoxyribonucleotide-(2'-deoxyribose 5'-phosphate)-2'-deoxyribonucleotide-DNA = a 3'-end 2'-deoxyribonucleotide-(2,3-dehydro-2,3-deoxyribose 5'-phosphate)-DNA + a 5'-end 5'-phospho-2'-deoxyribonucleoside-DNA + H(+). Its function is as follows. Involved in base excision repair of DNA damaged by oxidation or by mutagenic agents. Acts as a DNA glycosylase that recognizes and removes damaged bases. Has a preference for oxidized purines, such as 7,8-dihydro-8-oxoguanine (8-oxoG). Has AP (apurinic/apyrimidinic) lyase activity and introduces nicks in the DNA strand. Cleaves the DNA backbone by beta-delta elimination to generate a single-strand break at the site of the removed base with both 3'- and 5'-phosphates. The sequence is that of Formamidopyrimidine-DNA glycosylase from Burkholderia mallei (strain NCTC 10229).